The chain runs to 238 residues: 5-amino-6-(5-phospho-D-ribitylamino)uracil phosphatase YigB (238 aa).

D16 functions as the Nucleophile in the catalytic mechanism. 3 residues coordinate Mg(2+): D16, D18, and D188. 16-18 (DLD) serves as a coordination point for substrate.

It belongs to the HAD-like hydrolase superfamily. It depends on Mg(2+) as a cofactor. The cofactor is Mn(2+). Requires Co(2+) as cofactor. Zn(2+) is required as a cofactor.

It carries out the reaction 5-amino-6-(5-phospho-D-ribitylamino)uracil + H2O = 5-amino-6-(D-ribitylamino)uracil + phosphate. It functions in the pathway cofactor biosynthesis; riboflavin biosynthesis; 5-amino-6-(D-ribitylamino)uracil from GTP: step 4/4. Functionally, catalyzes the dephosphorylation of 5-amino-6-(5-phospho-D-ribitylamino)uracil, and thus could be involved in the riboflavin biosynthesis pathway. Is also able to dephosphorylate flavin mononucleotide (FMN) and other phosphoric acid esters. YigB is important for the formation of dormant persister cells. This is 5-amino-6-(5-phospho-D-ribitylamino)uracil phosphatase YigB (yigB) from Escherichia coli (strain K12).